The sequence spans 283 residues: NAD kinase (283 aa).

D68 (proton acceptor) is an active-site residue. Residues 68-69 (DG), 142-143 (ND), R153, D172, 183-188 (TAYSLS), and Q242 each bind NAD(+).

It belongs to the NAD kinase family. A divalent metal cation serves as cofactor.

Its subcellular location is the cytoplasm. It carries out the reaction NAD(+) + ATP = ADP + NADP(+) + H(+). In terms of biological role, involved in the regulation of the intracellular balance of NAD and NADP, and is a key enzyme in the biosynthesis of NADP. Catalyzes specifically the phosphorylation on 2'-hydroxyl of the adenosine moiety of NAD to yield NADP. This chain is NAD kinase, found in Thermoanaerobacter pseudethanolicus (strain ATCC 33223 / 39E) (Clostridium thermohydrosulfuricum).